Consider the following 150-residue polypeptide: NmrA-like family domain-containing protein 1 (150 aa).

NADP(+) contacts are provided by residues 7 to 12 (GATGAQ), 33 to 37 (RNPEQ), and lysine 71.

The protein belongs to the NmrA-type oxidoreductase family. As to quaternary structure, homodimer. Interacts with ASS1. Interaction is enhanced by low NADPH/NADP(+) ratios, which results in inhibition of ASS1 activity.

It localises to the cytoplasm. Its subcellular location is the perinuclear region. It is found in the nucleus. Its function is as follows. Redox sensor protein. Undergoes restructuring and subcellular redistribution in response to changes in intracellular NADPH/NADP(+) levels. At low NADPH concentrations the protein is found mainly as a monomer, and binds argininosuccinate synthase (ASS1), the enzyme involved in nitric oxide synthesis. Association with ASS1 impairs its activity and reduces the production of nitric oxide, which subsecuently prevents apoptosis. Under normal NADPH concentrations, the protein is found as a dimer and hides the binding site for ASS1. The homodimer binds one molecule of NADPH. Has higher affinity for NADPH than for NADP(+). Binding to NADPH is necessary to form a stable dimer. This is NmrA-like family domain-containing protein 1 from Rattus norvegicus (Rat).